The chain runs to 37 residues: Photosystem II reaction center protein T (37 aa).

A helical membrane pass occupies residues 3 to 23 (ALVYTFLLVSTLGIIFFAIFF).

Belongs to the PsbT family. PSII is composed of 1 copy each of membrane proteins PsbA, PsbB, PsbC, PsbD, PsbE, PsbF, PsbH, PsbI, PsbJ, PsbK, PsbL, PsbM, PsbT, PsbY, PsbZ, Psb30/Ycf12, at least 3 peripheral proteins of the oxygen-evolving complex and a large number of cofactors. It forms dimeric complexes.

The protein resides in the plastid. It localises to the chloroplast thylakoid membrane. Functionally, found at the monomer-monomer interface of the photosystem II (PS II) dimer, plays a role in assembly and dimerization of PSII. PSII is a light-driven water plastoquinone oxidoreductase, using light energy to abstract electrons from H(2)O, generating a proton gradient subsequently used for ATP formation. In Cucumis sativus (Cucumber), this protein is Photosystem II reaction center protein T.